We begin with the raw amino-acid sequence, 119 residues long: Divalent-cation tolerance protein CutA (119 aa).

Cu cation contacts are provided by Cys23, His90, and His91.

The protein belongs to the CutA family. Homotrimer. It depends on Cu cation as a cofactor.

The protein resides in the cytoplasm. In terms of biological role, involved in resistance toward heavy metals. The protein is Divalent-cation tolerance protein CutA of Yersinia pseudotuberculosis serotype O:1b (strain IP 31758).